We begin with the raw amino-acid sequence, 3912 residues long: MCEVCADFQNLLELYEVRVASSDLKFQLLLKSEIETTFNYIQSWPQRQCMCLYRDTKNYDRFNLVVQSLICLTVQHLKHIDHLIDNYKRLTASAAQVVAQAQQQREQQRDEASAQAEAKESSAPAEEPKKEEPSGSAGEEAQGSGDGPAKKPPVGPCTPPPPQTANPQHKSHLQYTEEPWILPEVEKLLVLVSKVFLLNFPLYIAHKHGMHSRLDDLQAEEAHHLALICDLHDNDLPIYLLRNVSLFCNSGGFGAMSLCFEHPDLPVSTAHSMTAAVSNVKLWLNYHCNTQLFVPLRSRILQYMCKLSDQSLRSAATRAMADFVWSSMRDPLDVAVNFDTEGLALAFKYFTSTTLTMRLAGMAQINAHINLFNEICTTETVNEVELFGQRIANWLTENHIVQHLFGPNLHVEIVKQAHVLLNFLAVENQISEEDIKLIWQATQLKHCSKTIFDILPSLVKNLTPRPAMHLYSLLCRMDPKEHTEQSIYIASALTKQLWTRDTSRSQMNLMQDHLLGSNVTASSSDSGSIEGSNTEDDHVGADDSSIASGGGGGGVGNKSPIDGVTPCKQARHRRHICDPTTEKGKQISPEDMAKVDLVNKRIVNIIDNTSSEEELQSRAALELQLHRSRKKTSNKRRRQKTNKQIILPHELVEIWDGVEDVPSSDEADGEADGDGEGELLADSDECSDGATSQLVPDAVLKHLQGEGPFIRAIETNINELLSGAENDGSYSSPMSNKSEKNLADFDDEDVSPCEEELAQLVSSRANCSDVPPAFAAAAAAMMVAQSAMALQKSGESNVAAAAAAVAAAAAATGTAQQTLVAMNRQASVAAAAAVVAAAKAKSDSDVDLMDVVSGGKQHHSPKASQGSSTSGSTPVQPSFKLNDVCQPGNTLLWDLLQDDKIGQLGESLALEAEKALATLLCFSMDRQLRTKFIEGCLYNVANNRSVIVSLRLLPKLFASFQQFRPSDTHSMTMWAERNHRMMQCFFNNIRHYARRHAEVLITQNGEQQQQQLGGQLYSHKTQVSVRLQFLSSIFSTVGSPKSFRLTLEQLDALWEWLAHDPECADCYFSWLQAQAKGGDQHALGIEALQHLYLKKLPELRPEEFSMVALGLFQQLCSFARIAMAEYDNHSDQISASASAVGMYHLWKIALRAQSNDVSLAAIQYINMYYMGQQLRLEKEFVSQCMENLVQAATALESIDDENALMRVQRGLLLLNTHLDTFRRRYAFHLRRWAIEGKGIGSHSNLKNEGAGPPLRIVLQQAGLSEKSLLQMHACDLIADLKAEVSKWWESLQTGLAAPVLGLLLSDGPLRIITQGQELTSDYDERSLGDAGFKDNQIVYVSLGGRGARRKESNLEHPSMLPPPPKECLPTVLLLQPKYFEKLFCLMQTLGDMQPQASTVNPQHHTKAQLLSRRVWDILAMLPTNPHILDAFKSLVTDLSELEQLDAGGEEEQLATKRKQIKQKFRDLLDPNNLQKFMYSLHIVESLALTSSRRGESNGNVAMGNTPEQVRVKKSSMGRRRNSNEQPPPPPPEVKMSKEQLCELEAPLTPTPSTGLQDVETEASSSSGGDKENQPKQHSKRQKKGETFEQEKERPVGCSTPPSPTPPPPALSVVERGDNKWSEAFVKCGGLRHLYEIFSEGQLQQSAHPKELALNEWRHDCLASLLRILWLLGFEELQSADAHVLMSRPHPFMLQLMEVPQCLTRLSSILNDEVHQQHQASSANPLVFPYQFQHLRTGFWGRAQLIQFAMNILVSFVHASAEARRLLWAPTGTDHCRWLQKFILEDPEPAVRREICAGLYRICLGNAHSYRLLLAPLLHKLIALLPLAEQMSSGNQHTQFLLSEEGKDPYGPACRDYFWLLARLVDTLSPEMVAEEHIDIEMLCESISQSILTREYYELRHGYQDDGLVGLLNLMSNLIKYDTTFKYTPKALSFIEQLIGFLFDMPSPADRQKPKCKSASSRASAYDLLVELCRGCATNYAYLHGRLLAQHKSGPKQPYPWDYWPRDEGRAECGYVGLTNLGATCYMASCVQHLYMMPQARAAVLRVPPNAARKHGPTLLELQRMFAYLLESERKSYNPRSFCRVYQMDHQPLNTGEQKDMAEFFIDLVSKLEDMTPDLKHLVKRLFCGSLSNNVVSLDCGHVSRTAEDFYTVRCQVADMRNLQESLDEVTVKDTLEGDNMYTCSQCGKKVRAEKRACFKKLPQILCFNTMRYTFNMVTMLKEKVNTHFSFPLRLNMCHYVEKTLMPQQYKEERERRQKEKEGADGSGDGNDNEKAEATLDDDIEECYEYELVGVTVHTGTADGGHYYSFIKERTKTSYHTHERWFLFNDAEVKPFDPSQIAAECFGGEMTSKTYDSVTEKYLDFSFEKTNSAYMLFYERRLPEHLQRRHSELLVTPTPSPTVEEKSEAEEPTKMETSSSEIKADVDVEVEVEEKDKEKPAQTDTESKETPAKEEIADDKSKQDEPEEKKIEKQSREGEEKSETDEKPTEMTTVSTEEEKQPTANCDNHQQNNNSNSKASNDQQPSTSKAAQKLQLFRPLLNKELEDWIWQDNRQFLQDRNIFEHTYFNFMWQICGHIPQSLISETDVTCMAAKLSVSFFIETFIHAKEKPTMVPWVELLTKQFNASQEACEWFLSHMSQEPYWPVQVLIQCPNQMVRQMFQRLVIHVIQQLRASHAHLYLEVETDEDDKELIGQASCVTRFIGSLISLLEHGARANLRHLSEYFGLLCEFSRMGDEEAMYLLRIGVLKSLVDFYLGHKQTDSIDISSDNEDNSSEEALSVEKMRPASLDKMIALCASLVERSRGADFRLRLSPKDFSAIAGGKGFPFLYQQIKDGINPHQTKHLIHALCRWDERLATQIIGMLFASVTKHTELCAPFFKLLTLLTETQGGPVGLPCFTQLILPRMWDAAEYCPQSVLDWLSLQATKNKIAHAWILQSAEKWLEQFLLAHDNTRVRNAAAFLLVALVPSQPFRANFRAHSQHKLLALNPHSYRDINSDAQAVLHQVITLLLRLLRPARVYADIGAHGTTKLTAYFNLLSYCMVSKTEKLMASSYMRSLWELFHPRLSEPSVPAHHNKHALLTFWHHSLVDCPENAAQVANCPEITRNIAFNYILADHDDAEIVTYNRSMLPAYYGLLRLCCEQSRALTRQLSQHQNLQWAFKNITPHPTQYAAAVDELFKLMALFATRHPDASEQEKLDVTQFRRAVIVSYTSSLDARVSWSTLISALKILVDNEEDRTMVIFNGGIEMCFEALHTLHSMHHEATACHVAGDLFDLLGEMLLLLATLRTRTDSPAQKKQQQQQQQLEQQLQLQQQQMLQKQQQQSQSQTQTPQSPQQKEKQLQQQMQQHLQLQQLQQMQFQQQHFLRQQHQHSALAKALPDAVKRLATLLNTFNSPEISRMALEVLKELVRNPSLETISILAPILINCHLSVANAPNAIGPLGPYFPRRGAKHTPWPLGAKNSPRPPRPMVQMCIALAELTPRGLDADYDVQVESFYRPYHDFIDVMMRMCVNTGTLNDTLVKLQCLVAIESTPLHFTYFPKFWVGIHNNALTHKYVELLVKNQLLVEYLHNVLRDERSMLKDACVREFLELYYHKVAAQLPVARMIYTINYGMHSKDDIDELCGDLFAIRIIAQATGVPASVRKELRGSLRALQNKSERFRKESERDPFPNKKQKRDSQKIKEKEHPQPESEKETSTENDKPSDVSMESSGNAEQATDSTKPPTPAGSDDEQMDKTSVPSSDDETELEDELQPTPKRNKKASNKKTAQDRVNEEREKRLITLITMESYIQSIFAILKRDASVPSSGATKEPSEEPCGEASTSAAAAVKLSRPKGACTPPEPITDVNDTRCNIDTETEAEADEQSPKTSQTNGSQQNESPPAATSADTAPANPSPAPAAAVASTSQAASPTQI.

Disordered regions lie at residues 101-172, 518-590, 660-688, 851-878, and 1491-1611; these read AQQQ…HKSH, NVTA…ISPE, DVPS…ECSD, VVSG…VQPS, and SRRG…PALS. Residues 106-133 show a composition bias toward basic and acidic residues; sequence EQQRDEASAQAEAKESSAPAEEPKKEEP. The segment covering 134–143 has biased composition (low complexity); the sequence is SGSAGEEAQG. Positions 150 to 164 are enriched in pro residues; it reads KKPPVGPCTPPPPQT. Low complexity predominate over residues 522 to 532; that stretch reads SSSDSGSIEGS. A compositionally biased stretch (basic and acidic residues) spans 576 to 585; that stretch reads ICDPTTEKGK. Residues 660–687 are compositionally biased toward acidic residues; the sequence is DVPSSDEADGEADGDGEGELLADSDECS. Residues 862 to 876 are compositionally biased toward polar residues; that stretch reads KASQGSSTSGSTPVQ. The segment covering 1511–1520 has biased composition (basic residues); that stretch reads VKKSSMGRRR. A compositionally biased stretch (polar residues) spans 1550-1567; it reads TPSTGLQDVETEASSSSG. Residues 1583 to 1594 show a composition bias toward basic and acidic residues; sequence KGETFEQEKERP. The segment covering 1600–1609 has biased composition (pro residues); it reads PPSPTPPPPA. The 366-residue stretch at 2015–2380 folds into the USP domain; that stretch reads VGLTNLGATC…SAYMLFYERR (366 aa). Catalysis depends on cysteine 2024, which acts as the Nucleophile. The segment covering 2249-2263 has biased composition (basic and acidic residues); sequence YKEERERRQKEKEGA. The segment at 2249–2274 is disordered; that stretch reads YKEERERRQKEKEGADGSGDGNDNEK. The active-site Proton acceptor is histidine 2305. Disordered stretches follow at residues 2391–2529, 3322–3344, 3657–3776, and 3800–3912; these read ELLV…TSKA, QQSQ…LQQQ, SERF…EERE, and ASVP…PTQI. Basic and acidic residues-rich tracts occupy residues 2402-2413 and 2433-2488; these read VEEKSEAEEPTK and EKDK…EKPT. A compositionally biased stretch (low complexity) spans 2504–2523; it reads NCDNHQQNNNSNSKASNDQQ. Positions 3657–3703 are enriched in basic and acidic residues; sequence SERFRKESERDPFPNKKQKRDSQKIKEKEHPQPESEKETSTENDKPS. The segment covering 3706 to 3721 has biased composition (polar residues); the sequence is SMESSGNAEQATDSTK. A compositionally biased stretch (acidic residues) spans 3741 to 3751; that stretch reads SDDETELEDEL. The span at 3766-3776 shows a compositional bias: basic and acidic residues; that stretch reads TAQDRVNEERE. A compositionally biased stretch (polar residues) spans 3865-3877; sequence PKTSQTNGSQQNE. Over residues 3878–3912 the composition is skewed to low complexity; it reads SPPAATSADTAPANPSPAPAAAVASTSQAASPTQI.

It belongs to the peptidase C19 family. Interacts with Myc and ago.

The protein resides in the nucleus. It catalyses the reaction Thiol-dependent hydrolysis of ester, thioester, amide, peptide and isopeptide bonds formed by the C-terminal Gly of ubiquitin (a 76-residue protein attached to proteins as an intracellular targeting signal).. In terms of biological role, ubiquitin hydrolase that can remove conjugated ubiquitin from target proteins and polyubiquitin chains. Essential for Myc-mediated cell growth and proliferation in developing eyes and wings. In the wing and eye, the deubiquitinating activity acts as an antagonist to the SCF E3 ubiquitin-protein ligase member archipelago (ago) to regulate Myc and CycE stability and thus control cell growth and proliferation. Also appears to regulate ago by modulating its induction by Myc. May also promote cell apoptosis in the wing imaginal disk, acting in an apoptotic pathway that appears to be largely independent of Myc. Required for preventing the activation of the immune deficiency (Imd) and Toll signaling cascades under unchallenged conditions. Also appears to be involved in modulating the differential expression of certain antimicrobial peptides (AMP) in response to infection by either Gram-positive or Gram-negative bacteria. Involved in the regulation of DNA damage repair pathways, including euchromatic site-specific double strand break (DSB) repair. The protein is Ubiquitin carboxyl-terminal hydrolase puf of Drosophila melanogaster (Fruit fly).